Reading from the N-terminus, the 146-residue chain is Hemoglobin subunit beta (146 aa).

In terms of domain architecture, Globin spans 2-146 (FLTAEEKGLV…VANALAHKYH (145 aa)). At S44 the chain carries Phosphoserine. K59 carries the post-translational modification N6-acetyllysine. H63 is a binding site for heme b. Residue K82 is modified to N6-acetyllysine. H92 provides a ligand contact to heme b. C93 bears the S-nitrosocysteine mark. K144 carries the post-translational modification N6-acetyllysine.

The protein belongs to the globin family. As to quaternary structure, heterotetramer of two alpha chains and two beta chains. As to expression, red blood cells.

Its function is as follows. Involved in oxygen transport from the lung to the various peripheral tissues. The polypeptide is Hemoglobin subunit beta (HBB) (Lynx lynx (Eurasian lynx)).